The following is a 423-amino-acid chain: Gamma-glutamyl phosphate reductase (423 aa).

The protein belongs to the gamma-glutamyl phosphate reductase family.

The protein localises to the cytoplasm. It catalyses the reaction L-glutamate 5-semialdehyde + phosphate + NADP(+) = L-glutamyl 5-phosphate + NADPH + H(+). Its pathway is amino-acid biosynthesis; L-proline biosynthesis; L-glutamate 5-semialdehyde from L-glutamate: step 2/2. Catalyzes the NADPH-dependent reduction of L-glutamate 5-phosphate into L-glutamate 5-semialdehyde and phosphate. The product spontaneously undergoes cyclization to form 1-pyrroline-5-carboxylate. The polypeptide is Gamma-glutamyl phosphate reductase (Burkholderia ambifaria (strain MC40-6)).